A 147-amino-acid polypeptide reads, in one-letter code: Myoglobin (147 aa).

The region spanning 2 to 141 (ADFDMVLKCW…IITDMEADYK (140 aa)) is the Globin domain. His-60 contributes to the nitrite binding site. His-60 lines the O2 pocket. His-89 provides a ligand contact to heme b.

This sequence belongs to the globin family. Monomeric.

Its subcellular location is the cytoplasm. It is found in the sarcoplasm. It catalyses the reaction Fe(III)-heme b-[protein] + nitric oxide + H2O = Fe(II)-heme b-[protein] + nitrite + 2 H(+). The catalysed reaction is H2O2 + AH2 = A + 2 H2O. Monomeric heme protein which primary function is to store oxygen and facilitate its diffusion within muscle tissues. Reversibly binds oxygen through a pentacoordinated heme iron and enables its timely and efficient release as needed during periods of heightened demand. Depending on the oxidative conditions of tissues and cells, and in addition to its ability to bind oxygen, it also has a nitrite reductase activity whereby it regulates the production of bioactive nitric oxide. Under stress conditions, like hypoxia and anoxia, it also protects cells against reactive oxygen species thanks to its pseudoperoxidase activity. This is Myoglobin (mb) from Channichthys rhinoceratus (Unicorn icefish).